A 120-amino-acid chain; its full sequence is NAD(P)H-quinone oxidoreductase subunit 3, chloroplastic (120 aa).

The next 3 helical transmembrane spans lie at 9 to 29 (IFWA…IISG), 64 to 84 (MFAL…PWAM), and 88 to 108 (VLGV…IVGS).

This sequence belongs to the complex I subunit 3 family. As to quaternary structure, NDH is composed of at least 16 different subunits, 5 of which are encoded in the nucleus.

The protein localises to the plastid. It localises to the chloroplast thylakoid membrane. It catalyses the reaction a plastoquinone + NADH + (n+1) H(+)(in) = a plastoquinol + NAD(+) + n H(+)(out). The enzyme catalyses a plastoquinone + NADPH + (n+1) H(+)(in) = a plastoquinol + NADP(+) + n H(+)(out). NDH shuttles electrons from NAD(P)H:plastoquinone, via FMN and iron-sulfur (Fe-S) centers, to quinones in the photosynthetic chain and possibly in a chloroplast respiratory chain. The immediate electron acceptor for the enzyme in this species is believed to be plastoquinone. Couples the redox reaction to proton translocation, and thus conserves the redox energy in a proton gradient. The sequence is that of NAD(P)H-quinone oxidoreductase subunit 3, chloroplastic from Lemna minor (Common duckweed).